The sequence spans 313 residues: Caffeic acid 3-O-methyltransferase (313 aa).

112–118 (IDQDRVF) lines the substrate pocket. The tract at residues 144 to 162 (AFDYPGTDPRFNKIFNRAM) is substrate binding. S-adenosyl-L-methionine contacts are provided by glycine 190, aspartate 213, aspartate 233, methionine 234, and lysine 247. The Proton acceptor role is filled by histidine 251.

It belongs to the class I-like SAM-binding methyltransferase superfamily. Cation-independent O-methyltransferase family. COMT subfamily. Homodimer.

It carries out the reaction (E)-caffeate + S-adenosyl-L-methionine = (E)-ferulate + S-adenosyl-L-homocysteine + H(+). The protein operates within aromatic compound metabolism; phenylpropanoid biosynthesis. In terms of biological role, catalyzes the conversion of caffeic acid to ferulic acid and of 5-hydroxyferulic acid to sinapic acid. The resulting products may subsequently be converted to the corresponding alcohols that are incorporated into lignins. This chain is Caffeic acid 3-O-methyltransferase (COMT1), found in Eucalyptus globulus (Tasmanian blue gum).